A 343-amino-acid polypeptide reads, in one-letter code: Small ribosomal subunit biogenesis GTPase RsgA (343 aa).

A CP-type G domain is found at 116–275 (RGQLKPVAAN…LIDSPGIREF (160 aa)). Residues 163-166 (NKFD) and 217-225 (GQSGVGKSS) contribute to the GTP site. Zn(2+) contacts are provided by Cys-299, Cys-304, His-306, and Cys-312.

This sequence belongs to the TRAFAC class YlqF/YawG GTPase family. RsgA subfamily. As to quaternary structure, monomer. Associates with 30S ribosomal subunit, binds 16S rRNA. The cofactor is Zn(2+).

The protein resides in the cytoplasm. In terms of biological role, one of several proteins that assist in the late maturation steps of the functional core of the 30S ribosomal subunit. Helps release RbfA from mature subunits. May play a role in the assembly of ribosomal proteins into the subunit. Circularly permuted GTPase that catalyzes slow GTP hydrolysis, GTPase activity is stimulated by the 30S ribosomal subunit. The polypeptide is Small ribosomal subunit biogenesis GTPase RsgA (Pseudomonas fluorescens (strain Pf0-1)).